The primary structure comprises 112 residues: Colipase (112 aa).

The N-terminal stretch at 1 to 17 (MKVLVVLLVTLVAVAYA) is a signal peptide. Residues 18 to 22 (APGPR) constitute a propeptide, enterostatin, activation peptide. Disulfide bonds link C34/C45, C40/C56, C44/C78, C66/C86, and C80/C104.

It belongs to the colipase family. As to quaternary structure, forms a 1:1 stoichiometric complex with pancreatic lipase. In terms of tissue distribution, expressed by the pancreas.

It is found in the secreted. Functionally, colipase is a cofactor of pancreatic lipase. It allows the lipase to anchor itself to the lipid-water interface. Without colipase the enzyme is washed off by bile salts, which have an inhibitory effect on the lipase. In terms of biological role, enterostatin has a biological activity as a satiety signal. The chain is Colipase from Rattus norvegicus (Rat).